Reading from the N-terminus, the 328-residue chain is C-type lectin domain family 4 member K (328 aa).

At 1–43 the chain is on the cytoplasmic side; it reads MTVEKEAPDAHFTVDKQNISLWPREPPPKSGPSLVPGKTPTVR. Residues 44 to 64 form a helical; Signal-anchor for type II membrane protein membrane-spanning segment; the sequence is AALICLTLVLVASVLLQAVLY. At 65 to 328 the chain is on the extracellular side; that stretch reads PRFMGTISDV…CKRPYVPSEP (264 aa). N-linked (GlcNAc...) asparagine glycosylation is found at Asn87, Asn113, and Asn180. A coiled-coil region spans residues 145-190; sequence EEVSTLNAQIPELKSDLEKASALNTKIRALQGSLENMSKLLKRQND. The C-type lectin domain occupies 202–320; that stretch reads FKGNFYYFSL…CDKTFLFICK (119 aa). 2 disulfides stabilise this stretch: Cys223–Cys319 and Cys295–Cys311.

As to quaternary structure, homotrimer. Exclusively expressed by Langerhans cells. Expressed in astrocytoma and malignant ependymoma, but not in normal brain tissues.

The protein localises to the membrane. Its function is as follows. Calcium-dependent lectin displaying mannose-binding specificity. Induces the formation of Birbeck granules (BGs); is a potent regulator of membrane superimposition and zippering. Binds to sulfated as well as mannosylated glycans, keratan sulfate (KS) and beta-glucans. Facilitates uptake of antigens and is involved in the routing and/or processing of antigen for presentation to T cells. Major receptor on primary Langerhans cells for Candida species, Saccharomyces species, and Malassezia furfur. Protects against human immunodeficiency virus-1 (HIV-1) infection. Binds to high-mannose structures present on the envelope glycoprotein which is followed by subsequent targeting of the virus to the Birbeck granules leading to its rapid degradation. This is C-type lectin domain family 4 member K (CD207) from Homo sapiens (Human).